A 207-amino-acid chain; its full sequence is Probable GTP-binding protein EngB (207 aa).

The 176-residue stretch at 24-199 folds into the EngB-type G domain; the sequence is GGYEVAFAGR…RAIVGAWLGL (176 aa). Residues 32–39, 59–63, 77–80, 144–147, and 178–180 each bind GTP; these read GRSNAGKS, GRTQQ, DLPG, TKAD, and YSG. Mg(2+) is bound by residues serine 39 and threonine 61.

The protein belongs to the TRAFAC class TrmE-Era-EngA-EngB-Septin-like GTPase superfamily. EngB GTPase family. Mg(2+) serves as cofactor.

Functionally, necessary for normal cell division and for the maintenance of normal septation. This chain is Probable GTP-binding protein EngB, found in Xanthomonas euvesicatoria pv. vesicatoria (strain 85-10) (Xanthomonas campestris pv. vesicatoria).